Reading from the N-terminus, the 514-residue chain is 1-pyrroline-5-carboxylate dehydrogenase (514 aa).

Residues Glu286 and Cys320 contribute to the active site.

The protein belongs to the aldehyde dehydrogenase family. RocA subfamily.

It catalyses the reaction L-glutamate 5-semialdehyde + NAD(+) + H2O = L-glutamate + NADH + 2 H(+). The protein operates within amino-acid degradation; L-proline degradation into L-glutamate; L-glutamate from L-proline: step 2/2. The protein is 1-pyrroline-5-carboxylate dehydrogenase of Staphylococcus haemolyticus (strain JCSC1435).